The following is a 612-amino-acid chain: Amyloid-beta precursor-like protein (612 aa).

The first 21 residues, 1–21 (MGPSVRPGFLVVVIGLQFVAA), serve as a signal peptide directing secretion. At 22–542 (SMEVNSRKFE…NLYANSHANS (521 aa)) the chain is on the extracellular side. Residues 28-122 (RKFEPMVAFI…PFRCLVGPFQ (95 aa)) form a GFLD subdomain region. The region spanning 28 to 189 (RKFEPMVAFI…SGVEFVCCPK (162 aa)) is the E1 domain. Intrachain disulfides connect Cys-38/Cys-60, Cys-71/Cys-116, Cys-96/Cys-103, Cys-132/Cys-187, Cys-143/Cys-173, and Cys-157/Cys-186. N-linked (GlcNAc...) asparagine glycosylation is found at Asn-99, Asn-108, and Asn-150. The tract at residues 130-189 (EHCIFDHYHDPRVCNEFDQCNETAMSKCSARGMTTQSFAMLWPCQEPGHFSGVEFVCCPK) is cuBD subdomain. The region spanning 223-419 (GDSKYMSKYA…KQVRPNIDKF (197 aa)) is the E2 domain. Disordered stretches follow at residues 251–276 (ERDT…TDPK) and 437–490 (QEPT…FDSE). 2 stretches are compositionally biased toward basic and acidic residues: residues 439-453 (PTPK…KAED) and 470-483 (KPTE…EDIK). A helical membrane pass occupies residues 543–563 (VLGIAIGGVVVFIIIVVAVVM). The Cytoplasmic portion of the chain corresponds to 564–612 (LKRRTQRQRVTHGFVEVDPAASPEERHVANMQMSGYENPTYKYFEMQNQ). Residues 598–612 (GYENPTYKYFEMQNQ) form a required for the interaction with kinesin heavy chain and for anterograde transport in axons region. Residues 599-604 (YENPTY) carry the YENPXY motif motif.

This sequence belongs to the APP family. In terms of assembly, interacts (via cytoplasmic domain) with kinesin heavy chain. As to expression, expressed in the cervicothoracic ganglion (stellate ganglion) (at protein level).

It localises to the cell membrane. The protein localises to the cell projection. Its subcellular location is the axon. In terms of biological role, acts as a kinesin I membrane receptor, thereby playing a role in axonal anterograde transport of cargo towards synapses in axons. The polypeptide is Amyloid-beta precursor-like protein (Doryteuthis pealeii (Longfin inshore squid)).